A 256-amino-acid polypeptide reads, in one-letter code: Imidazole glycerol phosphate synthase subunit HisF (256 aa).

Residues Asp11 and Asp130 contribute to the active site.

This sequence belongs to the HisA/HisF family. In terms of assembly, heterodimer of HisH and HisF.

It is found in the cytoplasm. It catalyses the reaction 5-[(5-phospho-1-deoxy-D-ribulos-1-ylimino)methylamino]-1-(5-phospho-beta-D-ribosyl)imidazole-4-carboxamide + L-glutamine = D-erythro-1-(imidazol-4-yl)glycerol 3-phosphate + 5-amino-1-(5-phospho-beta-D-ribosyl)imidazole-4-carboxamide + L-glutamate + H(+). It functions in the pathway amino-acid biosynthesis; L-histidine biosynthesis; L-histidine from 5-phospho-alpha-D-ribose 1-diphosphate: step 5/9. Functionally, IGPS catalyzes the conversion of PRFAR and glutamine to IGP, AICAR and glutamate. The HisF subunit catalyzes the cyclization activity that produces IGP and AICAR from PRFAR using the ammonia provided by the HisH subunit. This chain is Imidazole glycerol phosphate synthase subunit HisF, found in Synechococcus sp. (strain CC9605).